The chain runs to 595 residues: Grainyhead-like protein 3 homolog (595 aa).

Positions 29 to 92 are transcription activation; sequence DAWSKYLENP…CDQVKRSCSE (64 aa). The Grh/CP2 DB domain occupies 221 to 454; sequence ANRDFEYTLE…DMETHPVLFI (234 aa). A disordered region spans residues 484 to 505; that stretch reads SSQSFPKGLEAPPSKQQTSEDS.

It belongs to the grh/CP2 family. Grainyhead subfamily.

Its subcellular location is the nucleus. Transcription factor playing important roles in primary neurulation and in the differentiation of stratified epithelia of both ectodermal and endodermal origin. Binds directly to the consensus DNA sequence 5'-AACCGGTT-3' acting as an activator and repressor on distinct target genes. In Xenopus laevis (African clawed frog), this protein is Grainyhead-like protein 3 homolog (grhl3).